Reading from the N-terminus, the 394-residue chain is Protein arginine N-methyltransferase 8 (394 aa).

The N-myristoyl glycine moiety is linked to residue glycine 2. The disordered stretch occupies residues 16–40; that stretch reads MAENAAESTEVNSPPSQPPQPVVPA. 2 short sequence motifs (SH3-binding) span residues 29–42 and 53–58; these read PPSQ…PAKP and PSCPGR. Residues 30 to 39 show a composition bias toward pro residues; that stretch reads PSQPPQPVVP. At arginine 58 the chain carries Omega-N-methylarginine; by autocatalysis. Position 73 is an asymmetric dimethylarginine; by autocatalysis (arginine 73). An SAM-dependent MTase PRMT-type domain is found at 73-394; sequence RDYYFDSYAH…TSVSNDYKMR (322 aa). Residues histidine 86, arginine 95, glycine 119, 119–122, glutamate 141, and glutamate 170 each bind S-adenosyl-L-methionine; that span reads GSGT. Residues glutamate 185 and glutamate 194 contribute to the active site.

It belongs to the class I-like SAM-binding methyltransferase superfamily. Protein arginine N-methyltransferase family. PRMT8 subfamily. In terms of assembly, homodimer. Tetramer; individual homodimers associates to form a homotetramer. Homooctamer; individual homodimers associates to form a homooctamer and homooligomerization is required for proper localization to the cell membrane. Heterodimer with PRMT1; heterodimerization may recruit PRMT1 activity to the plasma membrane. Interacts with PRMT2 (via the SH3 domain). Interacts with FYN (via the SH3 domain). Interacts with EWS; independently of EWS methylation status. As to expression, brain-specific.

It localises to the cell membrane. It carries out the reaction L-arginyl-[protein] + S-adenosyl-L-methionine = N(omega)-methyl-L-arginyl-[protein] + S-adenosyl-L-homocysteine + H(+). It catalyses the reaction L-arginyl-[protein] + 2 S-adenosyl-L-methionine = N(omega),N(omega)-dimethyl-L-arginyl-[protein] + 2 S-adenosyl-L-homocysteine + 2 H(+). Its function is as follows. S-adenosyl-L-methionine-dependent and membrane-associated arginine methyltransferase that can both catalyze the formation of omega-N monomethylarginine (MMA) and asymmetrical dimethylarginine (aDMA) in proteins such as NIFK, myelin basic protein, histone H4, H2A and H2A/H2B dimer. Able to mono- and dimethylate EWS protein; however its precise role toward EWS remains unclear as it still interacts with fully methylated EWS. The polypeptide is Protein arginine N-methyltransferase 8 (Homo sapiens (Human)).